A 1765-amino-acid polypeptide reads, in one-letter code: Tight junction protein ZO-1 (1765 aa).

A PDZ 1 domain is found at 23 to 110 (TVTLHRAPGF…NAKITIRRKK (88 aa)). Basic residues predominate over residues 102–112 (AKITIRRKKKV). Positions 102–189 (AKITIRRKKK…QPAKPTKVTL (88 aa)) are disordered. The segment covering 123-136 (PVSDNEDDSYDEDV) has biased composition (acidic residues). A Phosphoserine modification is found at Ser-125. Tyr-132 is subject to Phosphotyrosine. Positions 149-175 (RRGEKSWARDRSASRDRSLSPRSDRRS) are enriched in basic and acidic residues. Phosphoserine is present on residues Ser-175, Ser-178, and Ser-179. Phosphothreonine is present on Thr-185. In terms of domain architecture, PDZ 2 spans 186–264 (KVTLVKSRKN…KLKMVVQRDE (79 aa)). Phosphoserine is present on residues Ser-212 and Ser-241. Thr-267 is modified (phosphothreonine). Phosphoserine is present on residues Ser-275, Ser-277, Ser-280, Ser-284, Ser-290, Ser-294, Ser-297, Ser-300, Ser-323, Ser-329, Ser-334, Ser-337, and Ser-353. A disordered region spans residues 296 to 363 (ASDHSVRSHD…TPVKHVDDHT (68 aa)). Residues 299–308 (HSVRSHDRPP) are compositionally biased toward basic and acidic residues. The span at 325–338 (HSTQSPQQPSNGSL) shows a compositional bias: polar residues. Thr-354 is modified (phosphothreonine). The PDZ 3 domain occupies 421–502 (SMKLVKFRKG…GEEVTILAQK (82 aa)). In terms of domain architecture, SH3 spans 516–584 (GDSFYIRTHF…PNKNRAEQLA (69 aa)). 2 positions are modified to phosphoserine: Ser-617 and Ser-622. Residues 633-876 (YERVVLREAG…GTPPESAITR (244 aa)) are occludin (OCLN)-binding region. The 102-residue stretch at 690-791 (RLHTIKQIID…WYGALKEAIQ (102 aa)) folds into the Guanylate kinase-like domain. Position 809 is a phosphothreonine (Thr-809). Phosphoserine occurs at positions 810 and 821. Phosphotyrosine is present on Tyr-822. 3 positions are modified to phosphoserine: Ser-824, Ser-828, and Ser-837. Disordered regions lie at residues 825 to 941 (APGS…PASS) and 1023 to 1042 (ALGH…YDPQ). Phosphothreonine is present on residues Thr-846, Thr-848, Thr-854, Thr-861, and Thr-868. Residues 879-892 (EPVREDSSGMHHEN) show a composition bias toward basic and acidic residues. Over residues 893–906 (QTYPPYSPQAQPQA) the composition is skewed to low complexity. Ser-912 bears the Phosphoserine mark. Ser-1071 carries the post-translational modification Phosphoserine. The interval 1092–1585 (SYYDDKQPYP…SSTQPPEFDS (494 aa)) is disordered. Over residues 1106 to 1124 (DTQHPRDLDSRQHPEEASE) the composition is skewed to basic and acidic residues. Residues Tyr-1139 and Tyr-1164 each carry the phosphotyrosine modification. An actin-binding region (ABR) region spans residues 1150 to 1370 (RTSTLRHEEQ…FDRRSFESKP (221 aa)). Basic and acidic residues-rich tracts occupy residues 1268-1285 (KMFE…KDVN) and 1335-1346 (PPEDIVRSNHYD). Tyr-1353 is subject to Phosphotyrosine. Phosphoserine is present on Ser-1365. Residues 1388 to 1399 (SQSQPNFSSYSS) are compositionally biased toward low complexity. Residues 1401 to 1418 (GKPETDAMDRSFSEKRYD) show a composition bias toward basic and acidic residues. Position 1411 is a phosphoserine (Ser-1411). Polar residues-rich tracts occupy residues 1442 to 1468 (NSSL…NSYI) and 1509 to 1519 (GAEQTQKTITP). Basic and acidic residues predominate over residues 1535–1544 (PFERKFESPK). 2 positions are modified to phosphoserine: Ser-1542 and Ser-1614. One can recognise a ZU5 domain in the interval 1631–1765 (ATARGIFNSN…NCVSVLIDHF (135 aa)).

It belongs to the MAGUK family. As to quaternary structure, homodimer. Forms heterodimers TJP3. Forms a heterodimer (via PDZ2 domain) with TJP2/ZO2 (via PDZ2 domain). Interacts with OCLN. Interacts with CALM, claudins, CGN/cingulin, CXADR, GJA12, GJD3 and UBN1. Interacts (via ZU5 domain) with CDC42BPB and MYZAP. Interacts (via PDZ domain) with GJA1. Interacts (via PDZ domains) with ANKRD2. Interacts with BVES (via the C-terminus cytoplasmic tail). Interacts with HSPA4. Interacts with KIRREL1. Interacts with DLL1. Interacts with USP53 (via the C-terminal region). Interacts with DNMBP (via C-terminal domain); required for the apical cell-cell junction localization of DNMBP. Interacts with SPEF1. Interacts (via N-terminus) with CTNNA1. Interacts with CLDN18. Interacts with CLDN16 (via TRV motif); this is a prerequisite for anchoring of CLDN16 at the tight junction. Interacts with PKP1; the interaction facilitates TJP1/ZO-1 localization to the plasma membrane. In terms of processing, phosphorylated at tyrosine redidues in response to epidermal growth factor (EGF). This response is dependent on an intact actin microfilament system. Dephosphorylated by Ptprj.

It is found in the cell membrane. It localises to the cell junction. The protein localises to the tight junction. The protein resides in the gap junction. In terms of biological role, tjpP1, Tjp2, and Tjp3 are closely related scaffolding proteins that link tight junction (TJ) transmembrane proteins such as claudins, junctional adhesion molecules, and occludin to the actin cytoskeleton. The tight junction acts to limit movement of substances through the paracellular space and as a boundary between the compositionally distinct apical and basolateral plasma membrane domains of epithelial and endothelial cells. Necessary for lumenogenesis, and particularly efficient epithelial polarization and barrier formation. Plays a role in the regulation of cell migration by targeting Cdc42bpb to the leading edge of migrating cells. Plays an important role in podosome formation and associated function, thus regulating cell adhesion and matrix remodeling. With Tjp2 and Tjp3, participates in the junctional retention and stability of the transcription factor Dbpa, but is not involved in its shuttling to the nucleus. May play a role in mediating cell morphology changes during ameloblast differentiation via its role in tight junctions. This chain is Tight junction protein ZO-1, found in Rattus norvegicus (Rat).